Reading from the N-terminus, the 203-residue chain is A-type ATP synthase subunit E (203 aa).

Belongs to the V-ATPase E subunit family. As to quaternary structure, has multiple subunits with at least A(3), B(3), C, D, E, F, H, I and proteolipid K(x).

The protein resides in the cell membrane. Its function is as follows. Component of the A-type ATP synthase that produces ATP from ADP in the presence of a proton gradient across the membrane. The chain is A-type ATP synthase subunit E from Methanococcus maripaludis (strain C6 / ATCC BAA-1332).